The following is an 872-amino-acid chain: Alanine--tRNA ligase (872 aa).

Zn(2+) contacts are provided by histidine 567, histidine 571, cysteine 669, and histidine 673.

It belongs to the class-II aminoacyl-tRNA synthetase family. Zn(2+) is required as a cofactor.

The protein localises to the cytoplasm. The enzyme catalyses tRNA(Ala) + L-alanine + ATP = L-alanyl-tRNA(Ala) + AMP + diphosphate. Its function is as follows. Catalyzes the attachment of alanine to tRNA(Ala) in a two-step reaction: alanine is first activated by ATP to form Ala-AMP and then transferred to the acceptor end of tRNA(Ala). Also edits incorrectly charged Ser-tRNA(Ala) and Gly-tRNA(Ala) via its editing domain. The protein is Alanine--tRNA ligase of Streptococcus pyogenes serotype M3 (strain ATCC BAA-595 / MGAS315).